We begin with the raw amino-acid sequence, 145 residues long: MATPATESVQCFGRKKTAVAVTHCKRGRGLIKVNGSPIELVKPEILRYKAFEPILLLGRHRFVGVDMRIRVRGGGKTSQIYAIRQSIAKALVAYYQKYVDEQAKKEVKDILMRYDRTLLVADPRRCEPKKFGGRGARSRFQKSYR.

It belongs to the universal ribosomal protein uS9 family.

The protein resides in the cytoplasm. In Fritillaria agrestis (Stinkbells), this protein is Small ribosomal subunit protein uS9 (RPS16).